Here is a 520-residue protein sequence, read N- to C-terminus: Cobalt-zinc-cadmium resistance protein CzcB (520 aa).

Residues 9 to 29 (AAIAAIVLVGGVATGGVLLSG) form a helical membrane-spanning segment. The segment at 28-85 (SGRSAPEEQGGHSESKGHGDTEHHGKQAAEADHKDDKSHGDGEHHEVKKGPNGGALFS) is disordered. The span at 32–76 (APEEQGGHSESKGHGDTEHHGKQAAEADHKDDKSHGDGEHHEVKK) shows a compositional bias: basic and acidic residues. Residues 286-320 (EQKISAEQDYLSARNALQEAQISVQNAQQKLTAIG) adopt a coiled-coil conformation.

The protein belongs to the membrane fusion protein (MFP) (TC 8.A.1) family.

It is found in the cell inner membrane. CzcA and CzcB together would act in zinc efflux nearly as effectively as the complete czc efflux system (CzcABC). The CzcB protein is thought to funnel zinc cations to the CzcA transport protein. This Cupriavidus metallidurans (strain ATCC 43123 / DSM 2839 / NBRC 102507 / CH34) (Ralstonia metallidurans) protein is Cobalt-zinc-cadmium resistance protein CzcB (czcB).